A 262-amino-acid polypeptide reads, in one-letter code: Inactive snake venom serine proteinase 13 (262 aa).

Positions 1–18 (MGLIRVLANLLILQLSYA) are cleaved as a signal peptide. Positions 19–24 (QKSSEL) are excised as a propeptide. Residues 25 to 250 (VIGGDECNIN…HLDWIQSIIA (226 aa)) enclose the Peptidase S1 domain. 6 cysteine pairs are disulfide-bonded: Cys31/Cys162, Cys49/Cys65, Cys97/Cys257, Cys141/Cys211, Cys173/Cys190, and Cys201/Cys226. N-linked (GlcNAc...) asparagine glycosylation is found at Asn78, Asn102, and Asn153.

Belongs to the peptidase S1 family. Snake venom subfamily. Monomer. In terms of tissue distribution, expressed by the venom gland.

The protein resides in the secreted. This is Inactive snake venom serine proteinase 13 from Crotalus adamanteus (Eastern diamondback rattlesnake).